We begin with the raw amino-acid sequence, 87 residues long: Small ribosomal subunit protein uS15 (87 aa).

Belongs to the universal ribosomal protein uS15 family. As to quaternary structure, part of the 30S ribosomal subunit. Forms a bridge to the 50S subunit in the 70S ribosome, contacting the 23S rRNA.

Functionally, one of the primary rRNA binding proteins, it binds directly to 16S rRNA where it helps nucleate assembly of the platform of the 30S subunit by binding and bridging several RNA helices of the 16S rRNA. In terms of biological role, forms an intersubunit bridge (bridge B4) with the 23S rRNA of the 50S subunit in the ribosome. This Acetivibrio thermocellus (strain ATCC 27405 / DSM 1237 / JCM 9322 / NBRC 103400 / NCIMB 10682 / NRRL B-4536 / VPI 7372) (Clostridium thermocellum) protein is Small ribosomal subunit protein uS15.